The chain runs to 378 residues: MFGRFIRQYSTSKNIINVNELIVEKTKTPFQKYTDKTKLVFGKQFSDHMIEVQWTKEEGWGVPKISGYHNLSIPPSASVLHYALECFEGMKAYKDSNGKIRLFRPDQNMNRFLNSAKRICLPEFNKEAVIELIKKLCVLDKDWIPEGKGYSLYLRPTLIATQNSLGVGASNSALMFVIASPVGPYYPEGFKPVKLIADDQYVRAWAGGSGAFKLGSNYAPTIFPQLEAAKKGFSQVLWLLNDYVTEVGTMNMFVFWNNAQGEKELITPPLGDGTILPGVTRDSILKLTQQWGEFKITEKNFTMTELAKAIKEGRVFEAFGAGTAAIVSPIESISYKGENYSIPIDASLNCGPLTKRISDSIMAIQYGETNSDWSVIVD.

At K213 the chain carries N6-(pyridoxal phosphate)lysine.

This sequence belongs to the class-IV pyridoxal-phosphate-dependent aminotransferase family. As to quaternary structure, homodimer. Requires pyridoxal 5'-phosphate as cofactor.

It catalyses the reaction L-leucine + 2-oxoglutarate = 4-methyl-2-oxopentanoate + L-glutamate. It carries out the reaction L-isoleucine + 2-oxoglutarate = (S)-3-methyl-2-oxopentanoate + L-glutamate. The enzyme catalyses L-valine + 2-oxoglutarate = 3-methyl-2-oxobutanoate + L-glutamate. Its function is as follows. Catalyzes the first reaction in the catabolism of the essential branched chain amino acids leucine, isoleucine, and valine. In Dictyostelium discoideum (Social amoeba), this protein is Branched-chain-amino-acid aminotransferase (bcaA).